We begin with the raw amino-acid sequence, 524 residues long: Xanthotoxin 5-hydroxylase CYP82C4 (524 aa).

A helical transmembrane segment spans residues 1–21; that stretch reads MDTSLFSLFVPILVFVFIALF. Cysteine 463 contacts heme.

The protein belongs to the cytochrome P450 family. Heme is required as a cofactor. Expressed in both primary and lateral roots under iron-deficient conditions, except in apical root zones, and mostly in the root epidermal layer.

It localises to the membrane. The catalysed reaction is fraxetin + reduced [NADPH--hemoprotein reductase] + O2 = sideretin (reduced form) + oxidized [NADPH--hemoprotein reductase] + H2O + H(+). It carries out the reaction xanthotoxin + reduced [NADPH--hemoprotein reductase] + O2 = 5-hydroxyxanthotoxin + oxidized [NADPH--hemoprotein reductase] + H2O + 2 H(+). The protein operates within phenylpropanoid metabolism. Its function is as follows. Can hydroxylate xanthotoxin (8-methoxypsoralen) to form 5-hydroxyxanthotoxin (5-hydroxy-8-methoxypsoralen) in vivo and in vitro. Involved in the early iron deficiency response, possibly through an IDE1-like mediated pathway. Involved in the pathway of sideretin biosynthesis from feruloyl CoA, a redox-active catecholic metabolite exuded by roots in response to iron deficiency in order to facilitate the uptake of iron; this pathway consists in the successive conversion from feruloyl CoA to scopoletin, from scopoletin to fraxetin and from fraxetin to sideretin. Catalyzes the biosynthesis of sideretin via fraxetin hydroxylation. The chain is Xanthotoxin 5-hydroxylase CYP82C4 from Arabidopsis thaliana (Mouse-ear cress).